The following is a 141-amino-acid chain: MGMIQEFKEFAVKGNAMDLAVGVIIGGAFGKIVDSIVGDLIMPLVSRVVGKLDFSNLFFVLGDNPNNLTALADLKKAGIAVFAYGSFLTILVNFIILAFIIFMMVKQMNRMRKEEPAAPAEAPATPEDVLLLREIRDSLKK.

2 helical membrane passes run 21-41 (VGVI…GDLI) and 85-105 (GSFL…FMMV).

It belongs to the MscL family. As to quaternary structure, homopentamer.

It localises to the cell inner membrane. Its function is as follows. Channel that opens in response to stretch forces in the membrane lipid bilayer. May participate in the regulation of osmotic pressure changes within the cell. The polypeptide is Large-conductance mechanosensitive channel (Dechloromonas aromatica (strain RCB)).